The sequence spans 296 residues: Fructose-bisphosphate aldolase class 1 (296 aa).

The active-site Proton acceptor is the Glu-175. Lys-212 (schiff-base intermediate with dihydroxyacetone-P) is an active-site residue.

It belongs to the class I fructose-bisphosphate aldolase family.

The enzyme catalyses beta-D-fructose 1,6-bisphosphate = D-glyceraldehyde 3-phosphate + dihydroxyacetone phosphate. Its pathway is carbohydrate degradation; glycolysis; D-glyceraldehyde 3-phosphate and glycerone phosphate from D-glucose: step 4/4. The chain is Fructose-bisphosphate aldolase class 1 (fda) from Staphylococcus epidermidis (strain ATCC 12228 / FDA PCI 1200).